Here is a 254-residue protein sequence, read N- to C-terminus: Imidazole glycerol phosphate synthase subunit HisF (254 aa).

Active-site residues include Asp-12 and Asp-131.

It belongs to the HisA/HisF family. As to quaternary structure, heterodimer of HisH and HisF.

Its subcellular location is the cytoplasm. The catalysed reaction is 5-[(5-phospho-1-deoxy-D-ribulos-1-ylimino)methylamino]-1-(5-phospho-beta-D-ribosyl)imidazole-4-carboxamide + L-glutamine = D-erythro-1-(imidazol-4-yl)glycerol 3-phosphate + 5-amino-1-(5-phospho-beta-D-ribosyl)imidazole-4-carboxamide + L-glutamate + H(+). It functions in the pathway amino-acid biosynthesis; L-histidine biosynthesis; L-histidine from 5-phospho-alpha-D-ribose 1-diphosphate: step 5/9. Its function is as follows. IGPS catalyzes the conversion of PRFAR and glutamine to IGP, AICAR and glutamate. The HisF subunit catalyzes the cyclization activity that produces IGP and AICAR from PRFAR using the ammonia provided by the HisH subunit. This Frankia casuarinae (strain DSM 45818 / CECT 9043 / HFP020203 / CcI3) protein is Imidazole glycerol phosphate synthase subunit HisF.